The chain runs to 307 residues: Porphobilinogen deaminase (307 aa).

The residue at position 241 (C241) is an S-(dipyrrolylmethanemethyl)cysteine.

The protein belongs to the HMBS family. As to quaternary structure, monomer. Dipyrromethane serves as cofactor.

It catalyses the reaction 4 porphobilinogen + H2O = hydroxymethylbilane + 4 NH4(+). It functions in the pathway porphyrin-containing compound metabolism; protoporphyrin-IX biosynthesis; coproporphyrinogen-III from 5-aminolevulinate: step 2/4. Its function is as follows. Tetrapolymerization of the monopyrrole PBG into the hydroxymethylbilane pre-uroporphyrinogen in several discrete steps. The polypeptide is Porphobilinogen deaminase (Coxiella burnetii (strain CbuG_Q212) (Coxiella burnetii (strain Q212))).